A 502-amino-acid polypeptide reads, in one-letter code: Acetylcholine receptor subunit alpha-type unc-63 (502 aa).

The first 23 residues, 1-23 (MGPNDHGFAYILIFLLLSPPTHA), serve as a signal peptide directing secretion. The Extracellular segment spans residues 24–263 (NRDANRLFED…HLRRKTLFYT (240 aa)). Asparagine 136 carries N-linked (GlcNAc...) asparagine glycosylation. A disulfide bond links cysteine 151 and cysteine 165. The next 3 helical transmembrane spans lie at 264–284 (VNLI…FYLP), 293–313 (LCIS…EIIP), and 326–346 (LLFT…TLNV). Residues 347–470 (HYRSPTTHTM…WKYISVVMDR (124 aa)) are Cytoplasmic-facing. The chain crosses the membrane as a helical span at residues 471–491 (IFLITFTFACAFGTVVIIARA).

The protein belongs to the ligand-gated ion channel (TC 1.A.9) family. Acetylcholine receptor (TC 1.A.9.1) subfamily. As to quaternary structure, component of nicotinic acetylcholine receptor. In muscles, composed of 2 non-alpha subunits lev-1 and unc-29, and 3 alpha subunits unc-38, unc-63 and lev-8. In cholinergic motoneurons, composed of 2 non-alpha subunits acr-2 and acr-3, and 3 alpha subunits unc-38, unc-63 and acr-12. Interacts with lev-10. Expressed in body wall muscles, in vulval muscles and in neurons.

The protein localises to the postsynaptic cell membrane. It is found in the cell membrane. Its function is as follows. Alpha subunit of nicotinic acetylcholine receptor (nAChR). Probably acts in cholinergic motoneurons to regulate presynaptic neurotransmitter release, thereby ensuring normal level of excitation of cholinergic motoneurons during locomotion. Involved in nAChR sensitivity to nicotine and levamisole. The chain is Acetylcholine receptor subunit alpha-type unc-63 (unc-63) from Caenorhabditis elegans.